A 544-amino-acid polypeptide reads, in one-letter code: CTP synthase (544 aa).

The interval 1–267 is amidoligase domain; that stretch reads MAKFVFITGG…CREVLDVLDL (267 aa). Ser13 serves as a coordination point for CTP. Ser13 is a UTP binding site. Residues 14–19 and Asp71 contribute to the ATP site; that span reads SIGKGI. 2 residues coordinate Mg(2+): Asp71 and Glu141. CTP is bound by residues 148–150, 188–193, and Lys224; these read DIE and KTKPTQ. Residues 188–193 and Lys224 each bind UTP; that span reads KTKPTQ. Residues 292 to 534 form the Glutamine amidotransferase type-1 domain; the sequence is KVALVGKYIQ…IEAAQQRLPS (243 aa). An L-glutamine-binding site is contributed by Gly354. Catalysis depends on Cys381, which acts as the Nucleophile; for glutamine hydrolysis. L-glutamine is bound by residues 382–385, Glu405, and Arg462; that span reads LGMQ. Active-site residues include His507 and Glu509.

It belongs to the CTP synthase family. As to quaternary structure, homotetramer.

The catalysed reaction is UTP + L-glutamine + ATP + H2O = CTP + L-glutamate + ADP + phosphate + 2 H(+). It carries out the reaction L-glutamine + H2O = L-glutamate + NH4(+). It catalyses the reaction UTP + NH4(+) + ATP = CTP + ADP + phosphate + 2 H(+). It participates in pyrimidine metabolism; CTP biosynthesis via de novo pathway; CTP from UDP: step 2/2. With respect to regulation, allosterically activated by GTP, when glutamine is the substrate; GTP has no effect on the reaction when ammonia is the substrate. The allosteric effector GTP functions by stabilizing the protein conformation that binds the tetrahedral intermediate(s) formed during glutamine hydrolysis. Inhibited by the product CTP, via allosteric rather than competitive inhibition. Catalyzes the ATP-dependent amination of UTP to CTP with either L-glutamine or ammonia as the source of nitrogen. Regulates intracellular CTP levels through interactions with the four ribonucleotide triphosphates. The protein is CTP synthase of Parasynechococcus marenigrum (strain WH8102).